The primary structure comprises 120 residues: Large ribosomal subunit protein eL8 (120 aa).

Belongs to the eukaryotic ribosomal protein eL8 family. In terms of assembly, part of the 50S ribosomal subunit. Probably part of the RNase P complex.

It is found in the cytoplasm. In terms of biological role, multifunctional RNA-binding protein that recognizes the K-turn motif in ribosomal RNA, the RNA component of RNase P, box H/ACA, box C/D and box C'/D' sRNAs. In Methanosarcina mazei (strain ATCC BAA-159 / DSM 3647 / Goe1 / Go1 / JCM 11833 / OCM 88) (Methanosarcina frisia), this protein is Large ribosomal subunit protein eL8.